Consider the following 124-residue polypeptide: Late histone H2B.2.1 (124 aa).

The interval 1–32 (MPAKQTSGKGAKKAGKAKGRPAGASKTRRRKR) is disordered. The segment covering 10–19 (GAKKAGKAKG) has biased composition (basic residues). O-linked (GlcNAc) serine glycosylation is present at S111. K119 is covalently cross-linked (Glycyl lysine isopeptide (Lys-Gly) (interchain with G-Cter in ubiquitin)).

This sequence belongs to the histone H2B family. The nucleosome is a histone octamer containing two molecules each of H2A, H2B, H3 and H4 assembled in one H3-H4 heterotetramer and two H2A-H2B heterodimers. The octamer wraps approximately 147 bp of DNA. Post-translationally, monoubiquitination of Lys-119 gives a specific tag for epigenetic transcriptional activation and is also prerequisite for histone H3 'Lys-4' and 'Lys-79' methylation. GlcNAcylation at Ser-111 promotes monoubiquitination of Lys-119. It fluctuates in response to extracellular glucose, and associates with transcribed genes.

The protein localises to the nucleus. The protein resides in the chromosome. Functionally, core component of nucleosome. Nucleosomes wrap and compact DNA into chromatin, limiting DNA accessibility to the cellular machineries which require DNA as a template. Histones thereby play a central role in transcription regulation, DNA repair, DNA replication and chromosomal stability. DNA accessibility is regulated via a complex set of post-translational modifications of histones, also called histone code, and nucleosome remodeling. This is Late histone H2B.2.1 from Psammechinus miliaris (Green sea urchin).